Reading from the N-terminus, the 293-residue chain is Elongation factor Ts (293 aa).

Positions 80 to 83 (TDFV) are involved in Mg(2+) ion dislocation from EF-Tu.

This sequence belongs to the EF-Ts family.

It is found in the cytoplasm. Its function is as follows. Associates with the EF-Tu.GDP complex and induces the exchange of GDP to GTP. It remains bound to the aminoacyl-tRNA.EF-Tu.GTP complex up to the GTP hydrolysis stage on the ribosome. The polypeptide is Elongation factor Ts (Burkholderia ambifaria (strain MC40-6)).